A 435-amino-acid chain; its full sequence is Glutamine synthetase (435 aa).

Positions 12–94 constitute a GS beta-grasp domain; it reads KGVKYFMISY…VAADCIMDDA (83 aa). The region spanning 100 to 435 is the GS catalytic domain; that stretch reads PRVVLKKLVA…EWEHQTTLDV (336 aa). Mg(2+) contacts are provided by E123, E125, E180, and E187. G232 contributes to the L-glutamate binding site. Residue H236 participates in Mg(2+) binding. Position 240 (S240) interacts with ATP. Residues R291 and R315 each coordinate L-glutamate. R315 and R320 together coordinate ATP. Mg(2+) is bound at residue E328. An L-glutamate-binding site is contributed by R330.

It belongs to the glutamine synthetase family. Homooctamer. The cofactor is Mg(2+).

The enzyme catalyses L-glutamate + NH4(+) + ATP = L-glutamine + ADP + phosphate + H(+). With respect to regulation, inhibited by methionine sulfoximine, ADP and pyrophosphate, but not by various nitrogen-containing metabolites that inhibit other GS enzymes. Catalyzes the ATP-dependent biosynthesis of glutamine from glutamate and ammonia. The chain is Glutamine synthetase from Rhizobium meliloti (strain 1021) (Ensifer meliloti).